A 310-amino-acid chain; its full sequence is MVKVYAPASSANMSVGFDVLGAAVTPVDGALLGDVVTVEAAETFSLNNLGRFADKLPSEPRENIVYQCWERFCLELGKQIPVAMTLEKNMPIGSGLGSSACSVVAALMAMNEHCGKPLNDTRLLALMGELEGRISGSIHYDNVAPCFLGGMQLMIEENDIISQQVPGFDEWLWVLAYPGIKVSTAEARAILPAQYRRQDCIAHGRHLAGFIHACYSRQPELAAKLMKDVIAEPYRERLLPGFRQARQAVAEIGAVASGISGSGPTLFALCDKPDTAQRVADWLGKNYLQNQEGFVHICRLDTAGARVLEN.

ATP is bound at residue 91 to 101; that stretch reads PIGSGLGSSAC.

This sequence belongs to the GHMP kinase family. Homoserine kinase subfamily.

Its subcellular location is the cytoplasm. It catalyses the reaction L-homoserine + ATP = O-phospho-L-homoserine + ADP + H(+). Its pathway is amino-acid biosynthesis; L-threonine biosynthesis; L-threonine from L-aspartate: step 4/5. Functionally, catalyzes the ATP-dependent phosphorylation of L-homoserine to L-homoserine phosphate. In Shigella sonnei (strain Ss046), this protein is Homoserine kinase.